Reading from the N-terminus, the 961-residue chain is Glycine dehydrogenase (decarboxylating) (961 aa).

K709 carries the N6-(pyridoxal phosphate)lysine modification.

This sequence belongs to the GcvP family. As to quaternary structure, the glycine cleavage system is composed of four proteins: P, T, L and H. Pyridoxal 5'-phosphate is required as a cofactor.

It catalyses the reaction N(6)-[(R)-lipoyl]-L-lysyl-[glycine-cleavage complex H protein] + glycine + H(+) = N(6)-[(R)-S(8)-aminomethyldihydrolipoyl]-L-lysyl-[glycine-cleavage complex H protein] + CO2. In terms of biological role, the glycine cleavage system catalyzes the degradation of glycine. The P protein binds the alpha-amino group of glycine through its pyridoxal phosphate cofactor; CO(2) is released and the remaining methylamine moiety is then transferred to the lipoamide cofactor of the H protein. The protein is Glycine dehydrogenase (decarboxylating) of Streptomyces avermitilis (strain ATCC 31267 / DSM 46492 / JCM 5070 / NBRC 14893 / NCIMB 12804 / NRRL 8165 / MA-4680).